The chain runs to 161 residues: Putative 2'-deoxynucleoside 5'-phosphate N-hydrolase 1 (161 aa).

Residues 27–33, Y42, H60, E106, and 128–130 contribute to the substrate site; these read FLSGSIR and SSM.

This sequence belongs to the 2'-deoxynucleoside 5'-phosphate N-hydrolase 1 family. In terms of assembly, monomer and homodimer.

It catalyses the reaction a pyrimidine 2'-deoxyribonucleoside 5'-phosphate + H2O = a pyrimidine nucleobase + 2-deoxy-D-ribose 5-phosphate. It carries out the reaction a purine 2'-deoxyribonucleoside 5'-phosphate + H2O = a purine nucleobase + 2-deoxy-D-ribose 5-phosphate. Catalyzes the cleavage of the N-glycosidic bond of deoxyribonucleoside 5'-monophosphates to yield deoxyribose 5-phosphate and a purine or pyrimidine base. This Methanosarcina mazei (strain ATCC BAA-159 / DSM 3647 / Goe1 / Go1 / JCM 11833 / OCM 88) (Methanosarcina frisia) protein is Putative 2'-deoxynucleoside 5'-phosphate N-hydrolase 1.